Consider the following 151-residue polypeptide: Sec-independent protein translocase protein TatB (151 aa).

Residues 1 to 21 (MFGMSLPEIIIIAVIAVIFLG) form a helical membrane-spanning segment. A compositionally biased stretch (low complexity) spans 120–131 (NNDPLNNETLNE). The segment at 120–151 (NNDPLNNETLNEQPSKPSPNLNLENKEIKKEA) is disordered. Polar residues predominate over residues 132 to 142 (QPSKPSPNLNL).

Belongs to the TatB family. As to quaternary structure, the Tat system comprises two distinct complexes: a TatABC complex, containing multiple copies of TatA, TatB and TatC subunits, and a separate TatA complex, containing only TatA subunits. Substrates initially bind to the TatABC complex, which probably triggers association of the separate TatA complex to form the active translocon.

It localises to the cell inner membrane. Functionally, part of the twin-arginine translocation (Tat) system that transports large folded proteins containing a characteristic twin-arginine motif in their signal peptide across membranes. Together with TatC, TatB is part of a receptor directly interacting with Tat signal peptides. TatB may form an oligomeric binding site that transiently accommodates folded Tat precursor proteins before their translocation. The sequence is that of Sec-independent protein translocase protein TatB from Campylobacter fetus subsp. fetus (strain 82-40).